Here is a 1552-residue protein sequence, read N- to C-terminus: ABC multidrug transporter lscH (1552 aa).

Transmembrane regions (helical) follow at residues Glu-32–Ile-52 and Trp-68–Trp-88. Asn-91 carries N-linked (GlcNAc...) asparagine glycosylation. 8 helical membrane-spanning segments follow: residues Ser-100–Ile-120, His-158–Leu-178, Leu-280–Ala-300, Asn-311–Gly-331, Ala-413–Ala-433, Ala-457–Ile-477, Ile-500–Ile-520, and Leu-528–Ala-548. Positions Leu-280–Gly-559 constitute an ABC transmembrane type-1 1 domain. The disordered stretch occupies residues Ala-573–Ala-655. Over residues Ser-581–Gln-602 the composition is skewed to polar residues. N-linked (GlcNAc...) asparagine glycosylation is present at Asn-592. Residues Gly-639–Leu-884 form the ABC transporter 1 domain. Residue Gly-676–Ser-683 coordinates ATP. N-linked (GlcNAc...) asparagine glycans are attached at residues Asn-719 and Asn-834. Positions Gln-887–Arg-912 are enriched in basic and acidic residues. The segment at Gln-887 to Asn-917 is disordered. Helical transmembrane passes span Gly-957–Phe-977 and Ala-1005–Ile-1025. The 279-residue stretch at Ile-963–Glu-1241 folds into the ABC transmembrane type-1 2 domain. Residue Asn-1028 is glycosylated (N-linked (GlcNAc...) asparagine). The next 4 membrane-spanning stretches (helical) occupy residues Ala-1076–Val-1096, Tyr-1100–Leu-1120, Trp-1184–Thr-1204, and Ala-1210–Met-1230. Residues Ile-1295 to Leu-1538 enclose the ABC transporter 2 domain. N-linked (GlcNAc...) asparagine glycans are attached at residues Asn-1299 and Asn-1313. Gly-1328 to Ser-1335 contributes to the ATP binding site.

Belongs to the ABC transporter superfamily. ABCC family. Conjugate transporter (TC 3.A.1.208) subfamily.

The protein resides in the cell membrane. Its function is as follows. ABC multidrug transporter; part of the gene cluster that mediates the biosynthesis of the lipopeptide antibiotics leucinostatins that show extensive biological activities, including antimalarial, antiviral, antibacterial, antifungal, and antitumor activities, as well as phytotoxic. May be involved in the efflux of leucinostatins. The chain is ABC multidrug transporter lscH from Purpureocillium lilacinum (Paecilomyces lilacinus).